Here is a 357-residue protein sequence, read N- to C-terminus: Glutamine synthetase cytosolic isozyme (357 aa).

Residues 20–100 enclose the GS beta-grasp domain; the sequence is VIAEYIWIGG…VICDAYSPNG (81 aa). Residues 107–357 enclose the GS catalytic domain; sequence KRAAAAKIFN…IAETTILWKP (251 aa).

The protein belongs to the glutamine synthetase family. Homooctamer.

It localises to the cytoplasm. The catalysed reaction is L-glutamate + NH4(+) + ATP = L-glutamine + ADP + phosphate + H(+). The protein is Glutamine synthetase cytosolic isozyme of Pinus sylvestris (Scotch pine).